The chain runs to 629 residues: DNA-directed RNA polymerase subunit beta' (629 aa).

Zn(2+)-binding residues include Cys70, Cys72, Cys85, and Cys88. Mg(2+) is bound by residues Asp472, Asp474, and Asp476.

The protein belongs to the RNA polymerase beta' chain family. RpoC1 subfamily. As to quaternary structure, in plastids the minimal PEP RNA polymerase catalytic core is composed of four subunits: alpha, beta, beta', and beta''. When a (nuclear-encoded) sigma factor is associated with the core the holoenzyme is formed, which can initiate transcription. Requires Mg(2+) as cofactor. The cofactor is Zn(2+).

Its subcellular location is the plastid. The protein localises to the chloroplast. It catalyses the reaction RNA(n) + a ribonucleoside 5'-triphosphate = RNA(n+1) + diphosphate. Its function is as follows. DNA-dependent RNA polymerase catalyzes the transcription of DNA into RNA using the four ribonucleoside triphosphates as substrates. The polypeptide is DNA-directed RNA polymerase subunit beta' (Porphyra purpurea (Red seaweed)).